A 918-amino-acid polypeptide reads, in one-letter code: Signal transduction histidine-protein kinase BarA (918 aa).

At 1-9 (MTNYSLRAR) the chain is on the cytoplasmic side. A helical transmembrane segment spans residues 10 to 31 (MMILILAPTVLIGLLLSIFFVV). The Periplasmic segment spans residues 32-176 (HRYNDLQRQL…KSVRLQQYKE (145 aa)). Residues 177–196 (IFISSVMMLFCIGIALIFGW) form a helical membrane-spanning segment. Over 197–918 (RLMRDVTGPI…VAREASKILG (722 aa)) the chain is Cytoplasmic. The HAMP domain occupies 200 to 252 (RDVTGPIRNMVNTVDRIRRGQLDSRVEGFMLGELDMLKNGINSMAMSLAAYHE). The Histidine kinase domain occupies 299-520 (NMSHELRTPL…TFWFHINLDL (222 aa)). A Phosphohistidine; by autocatalysis modification is found at histidine 302. The Response regulatory domain maps to 669 to 785 (TVMAVDDNPA…RLHNLLLRYK (117 aa)). Aspartate 718 carries the 4-aspartylphosphate modification. The HPt domain occupies 822-918 (KTDLARDMLQ…VAREASKILG (97 aa)). At histidine 861 the chain carries Phosphohistidine.

Post-translationally, activation requires a sequential transfer of a phosphate group from a His in the primary transmitter domain, to an Asp in the receiver domain and to a His in the secondary transmitter domain.

The protein localises to the cell inner membrane. It catalyses the reaction ATP + protein L-histidine = ADP + protein N-phospho-L-histidine.. Its function is as follows. Member of the two-component regulatory system UvrY/BarA involved in the regulation of carbon metabolism via the CsrA/CsrB regulatory system. Phosphorylates UvrY, probably via a four-step phosphorelay. This Escherichia coli O157:H7 protein is Signal transduction histidine-protein kinase BarA (barA).